The primary structure comprises 320 residues: Cytosolic Fe-S cluster assembly factor NUBP1 (320 aa).

At methionine 1 the chain carries N-acetylmethionine. [4Fe-4S] cluster-binding residues include cysteine 8, cysteine 22, cysteine 25, and cysteine 31. 62–69 (GKGGVGKS) is an ATP binding site. The [4Fe-4S] cluster site is built by cysteine 235 and cysteine 238. Serine 319 is modified (phosphoserine).

It belongs to the Mrp/NBP35 ATP-binding proteins family. NUBP1/NBP35 subfamily. In terms of assembly, heterotetramer of 2 NUBP1 and 2 NUBP2 chains. Interacts with KIFC1. Interacts with NUBP2. Interacts with the BBS/CCT complex subunit CCT1. [4Fe-4S] cluster is required as a cofactor.

It localises to the cytoplasm. Its subcellular location is the nucleus. The protein resides in the cell projection. It is found in the cytoskeleton. The protein localises to the cilium axoneme. It localises to the cilium basal body. Its subcellular location is the microtubule organizing center. The protein resides in the centrosome. It is found in the centriole. Functionally, component of the cytosolic iron-sulfur (Fe/S) protein assembly (CIA) machinery. Required for maturation of extramitochondrial Fe-S proteins. The NUBP1-NUBP2 heterotetramer forms a Fe-S scaffold complex, mediating the de novo assembly of an Fe-S cluster and its transfer to target apoproteins. Implicated in the regulation of centrosome duplication. Negatively regulates cilium formation and structure. This is Cytosolic Fe-S cluster assembly factor NUBP1 from Homo sapiens (Human).